Reading from the N-terminus, the 80-residue chain is uncharacterized protein (80 aa).

The protein to M.leprae U650M.

This is an uncharacterized protein from Mycobacterium bovis (strain ATCC BAA-935 / AF2122/97).